Here is a 461-residue protein sequence, read N- to C-terminus: Ribosomal RNA processing protein 1 homolog A (461 aa).

Acidic residues predominate over residues 239-252; it reads QDEEVASDSDESSE. Disordered regions lie at residues 239–295 and 354–461; these read QDEE…GGPV and EGRR…KRRE. 4 positions are modified to phosphoserine: Ser245, Ser247, Ser250, and Ser251. Residues 253–267 are compositionally biased toward basic and acidic residues; that stretch reads GGERGDALSQKRSEK. The span at 357 to 368 shows a compositional bias: basic residues; sequence RQKKTKKQKRLL. Residues 371 to 381 are compositionally biased toward basic and acidic residues; that stretch reads QQERGKGEKEP. Ser383 is modified (phosphoserine). Thr412 carries the phosphothreonine modification. A compositionally biased stretch (basic residues) spans 425–437; that stretch reads RGQRGARQRRRTP. An N5-methylglutamine modification is found at Gln427.

Belongs to the RRP1 family. In terms of assembly, interacts with C1QBP. Interacts with RRP1B. In terms of processing, methylated at Gln-427 by N6AMT1. In terms of tissue distribution, ubiquitously expressed in fetal and adult tissues.

It localises to the nucleus. Its subcellular location is the nucleolus. Its function is as follows. Plays a critical role in the generation of 28S rRNA. The protein is Ribosomal RNA processing protein 1 homolog A (RRP1) of Homo sapiens (Human).